An 88-amino-acid polypeptide reads, in one-letter code: MANIKSSKKRSIQSEKKRKYNSSKKSMIRSFIKKVKNSILKKEKDTINNSFIEMQSILDRYAKKNLIHKNKASRLKSRLSKKIKFIFK.

Residues 1–22 (MANIKSSKKRSIQSEKKRKYNS) show a composition bias toward basic residues. The disordered stretch occupies residues 1–26 (MANIKSSKKRSIQSEKKRKYNSSKKS).

It belongs to the bacterial ribosomal protein bS20 family.

Its function is as follows. Binds directly to 16S ribosomal RNA. This chain is Small ribosomal subunit protein bS20, found in Wigglesworthia glossinidia brevipalpis.